Consider the following 761-residue polypeptide: ARF GTPase-activating protein GIT1 (761 aa).

Residues 1–124 (MSRKGPRAEV…AFVHKLPCRD (124 aa)) enclose the Arf-GAP domain. Residues 1 to 124 (MSRKGPRAEV…AFVHKLPCRD (124 aa)) are interaction with gamma-tubulin and localization to the centrosome. The C4-type zinc finger occupies 11 to 34 (CADCSAPDPGWASISRGVLVCDEC). ANK repeat units lie at residues 132 to 161 (DLSKQLHSSVRTGNLETCLRLLSLGAQANF), 166 to 195 (KGTTPLHVAAKAGQTLQAELLVVYGADPGS), and 199 to 228 (NGRTPIDYARQAGHHELAERLVECQYELTD). Position 224 is a phosphotyrosine (tyrosine 224). Residues 245-365 (HYIIPQMADS…QGKSLSSPTD (121 aa)) form an interaction with PCLO region. An interaction with PTK2/FAK1 region spans residues 253-415 (DSLDLSELAK…NRARSMDSSD (163 aa)). Residues 254–367 (SLDLSELAKA…KSLSSPTDNL (114 aa)) are interaction with ARHGEF7. Residues 354 to 416 (RQQGKSLSSP…RARSMDSSDL (63 aa)) form a disordered region. Residues 357-374 (GKSLSSPTDNLELSLRSQ) show a composition bias toward polar residues. Serine 359 and serine 362 each carry phosphoserine. Position 364 is a phosphothreonine (threonine 364). The interaction with NCK2 and GRIN3A stretch occupies residues 366 to 587 (NLELSLRSQS…QEGSRHTSKL (222 aa)). The required for localization at synapses stretch occupies residues 366 to 587 (NLELSLRSQS…QEGSRHTSKL (222 aa)). Residues serine 370 and serine 375 each carry the phosphoserine modification. Residue tyrosine 383 is modified to Phosphotyrosine. Phosphoserine is present on residues serine 385 and serine 388. Residues 385–394 (SVASDEDTDQ) are compositionally biased toward acidic residues. Threonine 392 bears the Phosphothreonine mark. Serine 410, serine 413, and serine 417 each carry phosphoserine. The tract at residues 411 to 466 (MDSSDLSDGAVTLQEYLELKKALATSEAKVQQLMKVNSSLSDELRRLQREIHKLQA) is interaction with MAPK1. The segment at 420 to 620 (AVTLQEYLEL…EGKRFLELGK (201 aa)) is interaction with IKBKG. The stretch at 440 to 474 (VQQLMKVNSSLSDELRRLQREIHKLQAENLQLRQP) forms a coiled coil. The tract at residues 471–501 (LRQPPGPVPTPPLPSERAEHTPMAPGGSTHR) is disordered. The segment covering 474 to 484 (PPGPVPTPPLP) has biased composition (pro residues). Threonine 480 carries the phosphothreonine modification. A phosphoserine mark is found at serine 498 and serine 536. The residue at position 537 (threonine 537) is a Phosphothreonine. Phosphotyrosine occurs at positions 545 and 554. Phosphoserine is present on residues serine 561, serine 571, serine 592, and serine 596. Residues 572 to 606 (PLLSCSQEGSRHTSKLSRHGSGADSDYENTQSGDP) are disordered. Phosphothreonine is present on threonine 601. A Phosphoserine modification is found at serine 630. An interaction with PXN and TGFB1I1 region spans residues 637–761 (PGLPSTEDVI…VTITTREKKQ (125 aa)).

As to quaternary structure, forms homodimers and possibly oligomers. May forms heterooligomers with GIT2. Interacts with G protein-coupled receptor kinases, including GRK2, GRK3, GRK5 and GRK6. Interacts with PPFIA1, PPFIA2 and PPFIA4. Interacts with GRIP1 and forms a ternary complex with PPFIA1 and GRIP1. Directly interacts with ARHGEF7/beta-PIX, forming in vitro a heptameric complex made of a GIT1 dimer and an ARHGEF7 trimer. Directly interacts with PXN/paxillin; this interaction is enhanced in the presence of ARHGEF7. Directly interacts (via C-terminus) with TGFB1I1/Hic-5 (via LD motif 3). Directly interacts with PTK2/FAK1. May interact with PTK2B/PYK2; this interaction may be indirect. Interacts with AMPA receptors GRIA2/3. Directly interacts with protein Piccolo/PCLO. Forms a complex with Ephrin-B1/EFNB1 and NCK2/GRB4 (via SH2); this interaction is important for spine morphogenesis and synapse formation. Interaction with NCK2 is transient and depends upon GIT1 phosphorylation at Tyr-383. Interacts with GRIN3A/GluN3A (via C-terminus); this interaction competes with GIT1 interaction with ARHGEF7 and limits synaptic localization of GIT1. Interacts with IKBKG/NEMO in resting bone mesenchymal stem cells, as well as in TNF-stimulated cells; this interaction may increase IKBKG affinity for 'Lys-63'-linked polyubiquitin chains. Interacts with GABA(A) receptors, including GABRB3 and GABRG2. Interacts with SCRIB. Interacts (via N- and C-terminus) with ENTR1/SDCCAG3 (via N-terminus); this interaction is direct. May form a tripartite complex with ENTR1 and PTPN13. Interacts with YWHAZ. Interacts with PAK1. Interacts with PAK3. Directly interacts (via N-terminus) with gamma-tubulin. Interacts with MAPK1 and MAPK3; this interaction is required for MAPK1/3 recruitment to focal adhesions. Post-translationally, phosphorylated by PAK1. Phosphorylation on tyrosine residues may be catalyzed by PTK2/FAK1 and SRC in growing fibroblasts. Phosphorylation at Tyr-383 is induced by activation of Ephrin-B1/EFNB1 and catalyzed by SRC family kinases. It is required for the interaction with NCK2 and for GIT1 recruitment to synapses in hippocampal neurons.

The protein resides in the cytoplasm. It localises to the synapse. It is found in the presynapse. Its subcellular location is the postsynapse. The protein localises to the postsynaptic density. The protein resides in the cell junction. It localises to the focal adhesion. It is found in the cell projection. Its subcellular location is the lamellipodium. The protein localises to the cytoskeleton. The protein resides in the microtubule organizing center. It localises to the centrosome. It is found in the spindle pole. Functionally, GTPase-activating protein for ADP ribosylation factor family members, including ARF1. Multidomain scaffold protein that interacts with numerous proteins and therefore participates in many cellular functions, including receptor internalization, focal adhesion remodeling, and signaling by both G protein-coupled receptors and tyrosine kinase receptors. Through PAK1 activation, positively regulates microtubule nucleation during interphase. Plays a role in the regulation of cytokinesis; for this function, may act in a pathway also involving ENTR1 and PTPN13. May promote cell motility both by regulating focal complex dynamics and by local activation of RAC1. May act as scaffold for MAPK1/3 signal transduction in focal adhesions. Recruits MAPK1/3/ERK1/2 to focal adhesions after EGF stimulation via a Src-dependent pathway, hence stimulating cell migration. Plays a role in brain development and function. Involved in the regulation of spine density and synaptic plasticity that is required for processes involved in learning. Plays an important role in dendritic spine morphogenesis and synapse formation. In hippocampal neurons, recruits guanine nucleotide exchange factors (GEFs), such as ARHGEF7/beta-PIX, to the synaptic membrane. These in turn locally activate RAC1, which is an essential step for spine morphogenesis and synapse formation. May contribute to the organization of presynaptic active zones through oligomerization and formation of a Piccolo/PCLO-based protein network, which includes ARHGEF7/beta-PIX and FAK1. In neurons, through its interaction with liprin-alpha family members, may be required for AMPA receptor (GRIA2/3) proper targeting to the cell membrane. In complex with GABA(A) receptors and ARHGEF7, plays a crucial role in regulating GABA(A) receptor synaptic stability, maintaining GPHN/gephyrin scaffolds and hence GABAergic inhibitory synaptic transmission, by locally coordinating RAC1 and PAK1 downstream effector activity, leading to F-actin stabilization. May also be important for RAC1 downstream signaling pathway through PAK3 and regulation of neuronal inhibitory transmission at presynaptic input. Required for successful bone regeneration during fracture healing. The function in intramembranous ossification may, at least partly, exerted by macrophages in which GIT1 is a key negative regulator of redox homeostasis, IL1B production, and glycolysis, acting through the ERK1/2/NRF2/NFE2L2 axis. May play a role in angiogenesis during fracture healing. In this process, may regulate activation of the canonical NF-kappa-B signal in bone mesenchymal stem cells by enhancing the interaction between NEMO and 'Lys-63'-ubiquitinated RIPK1/RIP1, eventually leading to enhanced production of VEGFA and others angiogenic factors. Essential for VEGF signaling through the activation of phospholipase C-gamma and ERK1/2, hence may control endothelial cell proliferation and angiogenesis. The chain is ARF GTPase-activating protein GIT1 (GIT1) from Homo sapiens (Human).